We begin with the raw amino-acid sequence, 206 residues long: Large ribosomal subunit protein uL4 (206 aa).

Positions 42 to 93 (KKQQGTHKTKNRSEVSRTGAKMYKQKGTGRARHHSARAPQFRGGGKAHGPVV) are disordered. A compositionally biased stretch (basic residues) spans 64 to 77 (YKQKGTGRARHHSA).

This sequence belongs to the universal ribosomal protein uL4 family. As to quaternary structure, part of the 50S ribosomal subunit.

Functionally, one of the primary rRNA binding proteins, this protein initially binds near the 5'-end of the 23S rRNA. It is important during the early stages of 50S assembly. It makes multiple contacts with different domains of the 23S rRNA in the assembled 50S subunit and ribosome. Forms part of the polypeptide exit tunnel. The sequence is that of Large ribosomal subunit protein uL4 from Agrobacterium fabrum (strain C58 / ATCC 33970) (Agrobacterium tumefaciens (strain C58)).